The sequence spans 463 residues: RuvB-like 2 (463 aa).

The residue at position 2 (Ala2) is an N-acetylalanine. Lys9 is covalently cross-linked (Glycyl lysine isopeptide (Lys-Gly) (interchain with G-Cter in SUMO2)). An ATP-binding site is contributed by 77–84 (GQPGTGKT). Residue Ser437 is modified to Phosphoserine. Glycyl lysine isopeptide (Lys-Gly) (interchain with G-Cter in SUMO2) cross-links involve residues Lys444 and Lys456.

It belongs to the RuvB family. In terms of assembly, forms homohexameric rings. Can form a dodecamer with RUVBL1 made of two stacked hexameric rings; however, even though RUVBL1 and RUVBL2 are present in equimolar ratio, the oligomeric status of each hexamer is not known. Oligomerization may regulate binding to nucleic acids and conversely, binding to nucleic acids may affect the dodecameric assembly. Interaction of the complex with DHX34 results in conformational changes of the N-terminus of the RUVBL2 subunits, resulting in loss of nucleotide binding ability and ATP hydrolysis of the complex. Interacts with the transcriptional activation domain of MYC. Interacts with ATF2. Component of the RNA polymerase II holoenzyme complex. May also act to bridge the LEF1/TCF1-CTNNB1 complex and TBP. Component of the NuA4 histone acetyltransferase complex which contains the catalytic subunit KAT5/TIP60 and the subunits EP400, TRRAP/PAF400, BRD8/SMAP, EPC1, DMAP1/DNMAP1, RUVBL1/TIP49, RUVBL2, ING3, actin, ACTL6A/BAF53A, MORF4L1/MRG15, MORF4L2/MRGX, MRGBP, YEATS4/GAS41, VPS72/YL1 and MEAF6. The NuA4 complex interacts with MYC and the adenovirus E1A protein. RUVBL2 interacts with EP400. Component of a NuA4-related complex which contains EP400, TRRAP/PAF400, SRCAP, BRD8/SMAP, EPC1, DMAP1/DNMAP1, RUVBL1/TIP49, RUVBL2, actin, ACTL6A/BAF53A, VPS72 and YEATS4/GAS41. Interacts with NPAT. Component of the chromatin-remodeling INO80 complex; specifically part of a complex module associated with the helicase ATP-binding and the helicase C-terminal domain of INO80. Component of some MLL1/MLL complex, at least composed of the core components KMT2A/MLL1, ASH2L, HCFC1/HCF1, WDR5 and RBBP5, as well as the facultative components BACC1, CHD8, E2F6, HSP70, INO80C, KANSL1, LAS1L, MAX, MCRS1, MGA, MYST1/MOF, PELP1, PHF20, PRP31, RING2, RUVB1/TIP49A, RUVB2/TIP49B, SENP3, TAF1, TAF4, TAF6, TAF7, TAF9 and TEX10. Interacts with IGHMBP2. Interacts with TELO2. Interacts with HINT1. Component of a SWR1-like complex. Component of the R2TP complex composed at least of RUVBL1, RUVBL2, RPAP3 and PIHD1. Component of the PAQosome complex which is responsible for the biogenesis of several protein complexes and which consists of R2TP complex members RUVBL1, RUVBL2, RPAP3 and PIH1D1, URI complex members PFDN2, PFDN6, PDRG1, UXT and URI1 as well as ASDURF, POLR2E and DNAAF10/WDR92. Interacts with ITFG1. Interacts with ZMYND10. Interacts with WAC; WAC positively regulates MTOR activity by promoting the assembly of the TTT complex composed of TELO2, TTI1 and TTI2 and the RUVBL complex composed of RUVBL1 and RUVBL2 into the TTT-RUVBL complex which leads to the dimerization of the mTORC1 complex and its subsequent activation. Forms a complex with APPL1 and APPL2. Interacts with ZNHIT2 (via HIT-type zinc finger) in the presence of ATP or ADP; shows a stronger interaction in the presence of ADP. The RUVBL1/RUVBL2 complex interacts with ZNHIT1 (via HIT-type zinc finger), ZNHIT3 (via HIT-type zinc finger), ZNHIT6 (via HIT-type zinc finger) and DDX59/ZNHIT5 (via HIT-type zinc finger) in the presence of ADP. Interacts with NOPCHAP1; the interaction is direct and disrupted upon ATP binding. Interacts with SMG1. As to quaternary structure, (Microbial infection) Interacts with Mumps L polymerase; this interaction regulates the viral transcription. Ubiquitously expressed. Highly expressed in testis and thymus.

It localises to the nucleus matrix. The protein localises to the nucleus. The protein resides in the nucleoplasm. It is found in the cytoplasm. Its subcellular location is the membrane. It localises to the dynein axonemal particle. It carries out the reaction ATP + H2O = ADP + phosphate + H(+). Possesses single-stranded DNA-stimulated ATPase and ATP-dependent DNA helicase (5' to 3') activity; hexamerization is thought to be critical for ATP hydrolysis and adjacent subunits in the ring-like structure contribute to the ATPase activity. Component of the NuA4 histone acetyltransferase complex which is involved in transcriptional activation of select genes principally by acetylation of nucleosomal histones H4 and H2A. This modification may both alter nucleosome -DNA interactions and promote interaction of the modified histones with other proteins which positively regulate transcription. This complex may be required for the activation of transcriptional programs associated with oncogene and proto-oncogene mediated growth induction, tumor suppressor mediated growth arrest and replicative senescence, apoptosis, and DNA repair. The NuA4 complex ATPase and helicase activities seem to be, at least in part, contributed by the association of RUVBL1 and RUVBL2 with EP400. NuA4 may also play a direct role in DNA repair when recruited to sites of DNA damage. Component of a SWR1-like complex that specifically mediates the removal of histone H2A.Z/H2AZ1 from the nucleosome. Proposed core component of the chromatin remodeling INO80 complex which exhibits DNA- and nucleosome-activated ATPase activity and catalyzes ATP-dependent nucleosome sliding. Plays an essential role in oncogenic transformation by MYC and also modulates transcriptional activation by the LEF1/TCF1-CTNNB1 complex. May also inhibit the transcriptional activity of ATF2. Involved in the endoplasmic reticulum (ER)-associated degradation (ERAD) pathway where it negatively regulates expression of ER stress response genes. May play a role in regulating the composition of the U5 snRNP complex. This chain is RuvB-like 2 (RUVBL2), found in Homo sapiens (Human).